The following is a 156-amino-acid chain: Cytochrome c-type biogenesis protein CcmE 2 (156 aa).

At 1-8 the chain is on the cytoplasmic side; that stretch reads MNPQRRRR. The chain crosses the membrane as a helical; Signal-anchor for type II membrane protein span at residues 9–29; that stretch reads LWWVLALLLAGGLATTLVSMA. The Periplasmic portion of the chain corresponds to 30 to 156; that stretch reads LQRNVAYLYT…AAANQGGALR (127 aa). The heme site is built by histidine 123 and tyrosine 127. A disordered region spans residues 135–156; sequence KMGSAHRKHDVPAAANQGGALR.

The protein belongs to the CcmE/CycJ family.

It localises to the cell inner membrane. Heme chaperone required for the biogenesis of c-type cytochromes. Transiently binds heme delivered by CcmC and transfers the heme to apo-cytochromes in a process facilitated by CcmF and CcmH. The polypeptide is Cytochrome c-type biogenesis protein CcmE 2 (Xanthomonas oryzae pv. oryzae (strain MAFF 311018)).